Consider the following 598-residue polypeptide: uncharacterized protein (598 aa).

In terms of domain architecture, ABC transmembrane type-1 spans 39–322; the sequence is LIMVFVFVTV…LSNQFNMIQM (284 aa). A run of 5 helical transmembrane segments spans residues 40 to 60, 80 to 100, 150 to 170, 177 to 197, and 273 to 293; these read IMVFVFVTVSSILGVLSPYLI, MLILGTIYALTSLLFWLQGKI, VLGNSIIQFFSGIVTLAGAVI, VILSLVTLSIVPLTVLITQIV, and LGFALISGFGGWLALKDIITV. The ABC transporter domain occupies 355–589; it reads IEFKNVWFSY…RGFYYELFTS (235 aa). 388–395 lines the ATP pocket; sequence GPTGSGKT.

It belongs to the ABC transporter superfamily.

The protein localises to the cell membrane. This is an uncharacterized protein from Thermotoga maritima (strain ATCC 43589 / DSM 3109 / JCM 10099 / NBRC 100826 / MSB8).